Here is a 196-residue protein sequence, read N- to C-terminus: Transcriptional regulatory protein UhpA (196 aa).

In terms of domain architecture, Response regulatory spans 3 to 116 (TVALIDDHLI…ELIAAVHTVA (114 aa)). Asp-54 bears the 4-aspartylphosphate mark. Residues 131–196 (AAGRQDPLTK…ELAHRMFDGW (66 aa)) form the HTH luxR-type domain. The H-T-H motif DNA-binding region spans 155–174 (VKEIAAELGLSPKTVHVHRA).

Post-translationally, phosphorylated and dephosphorylated by UhpB.

Its subcellular location is the cytoplasm. Its function is as follows. Part of the UhpABC signaling cascade that controls the expression of the hexose phosphate transporter UhpT. Activates the transcription of the uhpT gene. Acts by binding specifically to the uhpT promoter region. This chain is Transcriptional regulatory protein UhpA (uhpA), found in Salmonella typhimurium (strain LT2 / SGSC1412 / ATCC 700720).